A 1792-amino-acid polypeptide reads, in one-letter code: D-lysergyl-peptide-synthetase subunit 3 (1792 aa).

An adenylation (A) domain region spans residues 239-642 (FRQRCDLHPN…GRKDSQIKIR (404 aa)). The Carrier domain occupies 779 to 853 (SNEEHRLQRM…DLARKASQSV (75 aa)). Residue Ser-813 is modified to O-(pantetheine 4'-phosphoryl)serine. The interval 895–1285 (EDIYPCTPMQ…HILGQIHGKE (391 aa)) is condensation (C) domain. Residues 1415 to 1640 (VTGANGFIGT…AGEFNSSAGS (226 aa)) are reductase (R) domain.

The protein belongs to the NRP synthetase family.

It participates in alkaloid biosynthesis; ergot alkaloid biosynthesis. D-lysergyl-peptide-synthetase subunit 3; part of the gene cluster that mediates the biosynthesis of fungal ergot alkaloid. DmaW catalyzes the first step of ergot alkaloid biosynthesis by condensing dimethylallyl diphosphate (DMAP) and tryptophan to form 4-dimethylallyl-L-tryptophan. The second step is catalyzed by the methyltransferase easF that methylates 4-dimethylallyl-L-tryptophan in the presence of S-adenosyl-L-methionine, resulting in the formation of 4-dimethylallyl-L-abrine. The catalase easC and the FAD-dependent oxidoreductase easE then transform 4-dimethylallyl-L-abrine to chanoclavine-I which is further oxidized by easD in the presence of NAD(+), resulting in the formation of chanoclavine-I aldehyde. Agroclavine dehydrogenase easG then mediates the conversion of chanoclavine-I aldehyde to agroclavine via a non-enzymatic adduct reaction: the substrate is an iminium intermediate that is formed spontaneously from chanoclavine-I aldehyde in the presence of glutathione. The presence of easA is not required to complete this reaction. Further conversion of agroclavine to paspalic acid is a two-step process involving oxidation of agroclavine to elymoclavine and of elymoclavine to paspalic acid, the second step being performed by the elymoclavine oxidase cloA. Paspalic acid is then further converted to D-lysergic acid. Ergopeptines are assembled from D-lysergic acid and three different amino acids by the D-lysergyl-peptide-synthetases composed each of a monomudular and a trimodular nonribosomal peptide synthetase subunit. LpsB and lpsC encode the monomodular subunits responsible for D-lysergic acid activation and incorporation into the ergopeptine backbone. LpsA1 and A2 subunits encode the trimodular nonribosomal peptide synthetase assembling the tripeptide portion of ergopeptines. LpsA1 is responsible for formation of the major ergopeptine, ergotamine, and lpsA2 for alpha-ergocryptine, the minor ergopeptine of the total alkaloid mixture elaborated by C.purpurea. D-lysergyl-tripeptides are assembled by the nonribosomal peptide synthetases and released as N-(D-lysergyl-aminoacyl)-lactams. Cyclolization of the D-lysergyl-tripeptides is performed by the Fe(2+)/2-ketoglutarate-dependent dioxygenase easH which introduces a hydroxyl group into N-(D-lysergyl-aminoacyl)-lactam at alpha-C of the aminoacyl residue followed by spontaneous condensation with the terminal lactam carbonyl group. The chain is D-lysergyl-peptide-synthetase subunit 3 from Claviceps purpurea (strain 20.1) (Ergot fungus).